A 287-amino-acid polypeptide reads, in one-letter code: MLARFPLYLRLIRMDKPIGSLLLLWPTLNALWIASDGHPAPSLVVIFALGTLLMRSAGCAINDYADRDFDRHVKRTAERPLTSGKIRAWEAIAIAVGLALVSFLLILPLNGLTKELSVVAVFVAATYPFMKRFFAIPQAYLGIAFGFGIPMAFAAVQDTVPMIAWAMLAANVFWSVAYDTAYAMVDRDDDLKIGMRTSAITFGRHDVLAIMLCYAAMLGIYVWLGAALHFGWPYWAGWAAAAGCSIYHYTLIKDRERMACFAAFRHNNWLGGVLFAGIAAHYALAVR.

7 consecutive transmembrane segments (helical) span residues 30–50 (ALWIASDGHPAPSLVVIFALG), 92–112 (IAIAVGLALVSFLLILPLNGL), 133–153 (FFAIPQAYLGIAFGFGIPMAF), 158–178 (DTVPMIAWAMLAANVFWSVAY), 207–227 (VLAIMLCYAAMLGIYVWLGAA), 232–252 (WPYWAGWAAAAGCSIYHYTLI), and 266–286 (HNNWLGGVLFAGIAAHYALAV).

Belongs to the UbiA prenyltransferase family. Mg(2+) is required as a cofactor.

The protein localises to the cell inner membrane. The enzyme catalyses all-trans-octaprenyl diphosphate + 4-hydroxybenzoate = 4-hydroxy-3-(all-trans-octaprenyl)benzoate + diphosphate. The protein operates within cofactor biosynthesis; ubiquinone biosynthesis. Its function is as follows. Catalyzes the prenylation of para-hydroxybenzoate (PHB) with an all-trans polyprenyl group. Mediates the second step in the final reaction sequence of ubiquinone-8 (UQ-8) biosynthesis, which is the condensation of the polyisoprenoid side chain with PHB, generating the first membrane-bound Q intermediate 3-octaprenyl-4-hydroxybenzoate. In Burkholderia mallei (strain NCTC 10247), this protein is 4-hydroxybenzoate octaprenyltransferase.